The primary structure comprises 445 residues: Xylose isomerase (445 aa).

Residues H107 and D110 contribute to the active site. Mg(2+)-binding residues include E238, E274, H277, D302, D313, D315, and D345.

Belongs to the xylose isomerase family. Homotetramer. It depends on Mg(2+) as a cofactor.

The protein resides in the cytoplasm. It carries out the reaction alpha-D-xylose = alpha-D-xylulofuranose. This is Xylose isomerase from Bacillus velezensis (strain DSM 23117 / BGSC 10A6 / LMG 26770 / FZB42) (Bacillus amyloliquefaciens subsp. plantarum).